The sequence spans 374 residues: tRNA-specific 2-thiouridylase MnmA (374 aa).

ATP is bound by residues 12 to 19 (GMSGGVDS) and methionine 38. An interaction with target base in tRNA region spans residues 98-100 (NPD). Cysteine 103 acts as the Nucleophile in catalysis. Cysteine 103 and cysteine 207 are oxidised to a cystine. Glycine 128 serves as a coordination point for ATP. Residues 157 to 159 (KDQ) are interaction with tRNA. The active-site Cysteine persulfide intermediate is the cysteine 207. Positions 321 to 322 (RY) are interaction with tRNA.

Belongs to the MnmA/TRMU family.

The protein resides in the cytoplasm. It catalyses the reaction S-sulfanyl-L-cysteinyl-[protein] + uridine(34) in tRNA + AH2 + ATP = 2-thiouridine(34) in tRNA + L-cysteinyl-[protein] + A + AMP + diphosphate + H(+). In terms of biological role, catalyzes the 2-thiolation of uridine at the wobble position (U34) of tRNA, leading to the formation of s(2)U34. The sequence is that of tRNA-specific 2-thiouridylase MnmA from Aliivibrio fischeri (strain MJ11) (Vibrio fischeri).